The sequence spans 223 residues: UPF0758 protein FMG_0357 (223 aa).

Residues 101-223 enclose the MPN domain; it reads SLNDPDSVAE…SLSMRKGMYF (123 aa). The Zn(2+) site is built by H172, H174, and D185. The JAMM motif signature appears at 172 to 185; sequence HNHPSGSLIPSNAD.

This sequence belongs to the UPF0758 family.

The chain is UPF0758 protein FMG_0357 from Finegoldia magna (strain ATCC 29328 / DSM 20472 / WAL 2508) (Peptostreptococcus magnus).